A 166-amino-acid chain; its full sequence is Protein-export protein SecB (166 aa).

Belongs to the SecB family. In terms of assembly, homotetramer, a dimer of dimers. One homotetramer interacts with 1 SecA dimer.

It is found in the cytoplasm. In terms of biological role, one of the proteins required for the normal export of preproteins out of the cell cytoplasm. It is a molecular chaperone that binds to a subset of precursor proteins, maintaining them in a translocation-competent state. It also specifically binds to its receptor SecA. The polypeptide is Protein-export protein SecB (Acidiphilium cryptum (strain JF-5)).